A 97-amino-acid polypeptide reads, in one-letter code: uncharacterized protein (97 aa).

This sequence to M.thermoautotrophicum MTH1236.

This is an uncharacterized protein from Methanocaldococcus jannaschii (strain ATCC 43067 / DSM 2661 / JAL-1 / JCM 10045 / NBRC 100440) (Methanococcus jannaschii).